Reading from the N-terminus, the 517-residue chain is T-box transcription factor TBX5 (517 aa).

The segment at 1 to 46 (MADADEGFGLARTPLEPDSKDRSCDSKPESALGAPSKSPSSPQAAF) is disordered. The span at 15 to 28 (LEPDSKDRSCDSKP) shows a compositional bias: basic and acidic residues. Low complexity predominate over residues 34–45 (APSKSPSSPQAA). A DNA-binding region (T-box) is located at residues 58 to 238 (LHERELWLKF…NNPFAKGFRG (181 aa)). Disordered stretches follow at residues 270-313 (HSPF…YPLA) and 331-369 (SSTE…SYRT). The segment covering 271–300 (SPFSSETRALSTSSNLGSQYQCENGVSGPS) has biased composition (polar residues). N6-acetyllysine is present on Lys-338. Residues 357 to 369 (YPQQQGLSTSYRT) show a composition bias toward polar residues.

Monomer. Homodimer (via the T-box); binds DNA as homodimer. Interacts (via the T-box) with NKX2-5 (via the homeobox); this complex binds DNA. Interacts with GATA4. Interacts with KAT2A and KAT2B. Acetylation at Lys-338 by KAT2A and KAT2B promotes nuclear retention.

It is found in the nucleus. The protein resides in the cytoplasm. In terms of biological role, DNA-binding protein that regulates the transcription of several genes and is involved in heart development and limb pattern formation. Binds to the core DNA motif of NPPA promoter. This Rattus norvegicus (Rat) protein is T-box transcription factor TBX5 (Tbx5).